Here is a 422-residue protein sequence, read N- to C-terminus: Elongation factor 1-alpha (422 aa).

A tr-type G domain is found at lysine 5 to serine 221. The interval glycine 14 to serine 21 is G1. Glycine 14–serine 21 contacts GTP. Residue serine 21 participates in Mg(2+) binding. The segment at glycine 70–aspartate 74 is G2. The interval aspartate 91–glycine 94 is G3. Residues aspartate 91 to histidine 95 and asparagine 146 to aspartate 149 contribute to the GTP site. A G4 region spans residues asparagine 146–aspartate 149. Residues serine 185–phenylalanine 187 are G5.

Belongs to the TRAFAC class translation factor GTPase superfamily. Classic translation factor GTPase family. EF-Tu/EF-1A subfamily.

The protein resides in the cytoplasm. It carries out the reaction GTP + H2O = GDP + phosphate + H(+). GTP hydrolase that promotes the GTP-dependent binding of aminoacyl-tRNA to the A-site of ribosomes during protein biosynthesis. The sequence is that of Elongation factor 1-alpha from Methanosarcina acetivorans (strain ATCC 35395 / DSM 2834 / JCM 12185 / C2A).